A 195-amino-acid polypeptide reads, in one-letter code: Small ribosomal subunit protein eS1 (195 aa).

It belongs to the eukaryotic ribosomal protein eS1 family.

This is Small ribosomal subunit protein eS1 from Methanothermobacter thermautotrophicus (strain ATCC 29096 / DSM 1053 / JCM 10044 / NBRC 100330 / Delta H) (Methanobacterium thermoautotrophicum).